The chain runs to 368 residues: Probable staphylococcal-like nuclease CAN2 (368 aa).

G2 carries the N-myristoyl glycine lipid modification. C7 carries the S-palmitoyl cysteine lipid modification. The interval 16 to 56 (DHYPYYKPTSRPHYQPPHYHGQPAAPPAPLQQQHLGPHGVT) is disordered. Over residues 27-38 (PHYQPPHYHGQP) the composition is skewed to low complexity. The TNase-like domain occupies 168 to 344 (NTLPVYDKCI…RAANRGLWAS (177 aa)). Ca(2+) is bound at residue D181. The active site involves R251. A Ca(2+)-binding site is contributed by D256. Residues E259 and R293 contribute to the active site.

It belongs to the thermonuclease family. Ca(2+) is required as a cofactor.

The protein resides in the cell membrane. Its function is as follows. Enzyme that catalyzes the hydrolysis of both DNA and RNA at the 5' position of the phosphodiester bond. The polypeptide is Probable staphylococcal-like nuclease CAN2 (Oryza sativa subsp. japonica (Rice)).